A 288-amino-acid chain; its full sequence is Homoserine kinase (288 aa).

ATP is bound at residue 78 to 88 (PLARGLGSSSS).

The protein belongs to the GHMP kinase family. Homoserine kinase subfamily.

The protein resides in the cytoplasm. The catalysed reaction is L-homoserine + ATP = O-phospho-L-homoserine + ADP + H(+). It participates in amino-acid biosynthesis; L-threonine biosynthesis; L-threonine from L-aspartate: step 4/5. In terms of biological role, catalyzes the ATP-dependent phosphorylation of L-homoserine to L-homoserine phosphate. The protein is Homoserine kinase of Streptococcus mutans serotype c (strain ATCC 700610 / UA159).